Consider the following 123-residue polypeptide: Large ribosomal subunit protein eL8 (123 aa).

It belongs to the eukaryotic ribosomal protein eL8 family. As to quaternary structure, part of the 50S ribosomal subunit. Probably part of the RNase P complex.

The protein localises to the cytoplasm. Its function is as follows. Multifunctional RNA-binding protein that recognizes the K-turn motif in ribosomal RNA, the RNA component of RNase P, box H/ACA, box C/D and box C'/D' sRNAs. This Thermococcus gammatolerans (strain DSM 15229 / JCM 11827 / EJ3) protein is Large ribosomal subunit protein eL8.